We begin with the raw amino-acid sequence, 132 residues long: Profilin-1 (132 aa).

It belongs to the profilin family. Occurs in many kinds of cells as a complex with monomeric actin in a 1:1 ratio. As to expression, expressed in the nerve ring during late embryonic stages. In adults, expression is seen in the neurons, vulva and somatic gonad.

Its subcellular location is the cytoplasm. It localises to the cytoskeleton. Binds to actin and affects the structure of the cytoskeleton. At high concentrations, profilin prevents the polymerization of actin, whereas it enhances it at low concentrations. By binding to PIP2, it inhibits the formation of IP3 and DG. Also binds to poly(L-proline) and phosphatidylinositol 4,5-bisphosphate micelles. The protein is Profilin-1 (pfn-1) of Caenorhabditis elegans.